The sequence spans 378 residues: Uroporphyrinogen decarboxylase (378 aa).

Residues 40-44 (RQAGR), D90, Y167, S222, and H355 each bind substrate.

This sequence belongs to the uroporphyrinogen decarboxylase family. As to quaternary structure, homodimer.

The protein resides in the cytoplasm. The enzyme catalyses uroporphyrinogen III + 4 H(+) = coproporphyrinogen III + 4 CO2. It participates in porphyrin-containing compound metabolism; protoporphyrin-IX biosynthesis; coproporphyrinogen-III from 5-aminolevulinate: step 4/4. Catalyzes the decarboxylation of four acetate groups of uroporphyrinogen-III to yield coproporphyrinogen-III. This chain is Uroporphyrinogen decarboxylase, found in Psychrobacter arcticus (strain DSM 17307 / VKM B-2377 / 273-4).